Here is a 131-residue protein sequence, read N- to C-terminus: Small ribosomal subunit protein uS8 (131 aa).

This sequence belongs to the universal ribosomal protein uS8 family. As to quaternary structure, part of the 30S ribosomal subunit. Contacts proteins S5 and S12.

Functionally, one of the primary rRNA binding proteins, it binds directly to 16S rRNA central domain where it helps coordinate assembly of the platform of the 30S subunit. This chain is Small ribosomal subunit protein uS8, found in Bordetella avium (strain 197N).